The following is a 492-amino-acid chain: Trehalose-phosphatase (492 aa).

The segment at 1–55 is disordered; that stretch reads MTETVTDQGKQRSSKLQKNEAAKDEQVEGKGKETLESGTDKSAEQNSSLLVGQPD. Positions 17–43 are enriched in basic and acidic residues; it reads QKNEAAKDEQVEGKGKETLESGTDKSA. The Mg(2+) site is built by D213 and D215. Residue D215 is the Proton donor/acceptor of the active site. A substrate-binding site is contributed by 332 to 334; sequence QRK. D424 contacts Mg(2+).

It belongs to the gob-1 trehalose phosphatase family. The cofactor is Mg(2+).

It carries out the reaction alpha,alpha-trehalose 6-phosphate + H2O = alpha,alpha-trehalose + phosphate. With respect to regulation, inhibited by trehalose 6-sulfate. Catalyzes the hydrolysis of trehalose 6-phosphate to trehalose and phosphate; prevents the accumulation of toxic levels of trehalose 6-phosphate. This Brugia malayi (Filarial nematode worm) protein is Trehalose-phosphatase.